Here is a 605-residue protein sequence, read N- to C-terminus: MCGIVGIVGHQPVSERLVEALEPLEYRGYDSAGVATMDAGTLQRRRAEGKLGNLREKLKEAPLSGTIGIAHTRWATHGAPTERNAHPHFTEGVAVVHNGIIENFAELKDELAAGGAEFQTETDTEVVAHLLAKYRRDGLGRREAMHAMLKRVKGAYALAVLFEDDPSTIMAARTGPLAIGHGNGEMFLGSDAIALAPFTNEITYLIDGDWAVIGKTGVHIFDFDGNVVERPRQISTAAAFLVDKGNHRHFMEKEIYEQPEVIAIALGHYVNVIDKSCRSDSDAIDFAGVESLAISCCGTAYLAGLIGKYWFERYARLPVEIAVASEFRYREIPLSPQSALFISQSGETADTLASLRYCKAHGLRIGAVVNARESTMARESDAVFPILAGPEIGVARTKAFTCQLAVLAALRAGAGKARGTISGDEEQALIKSLAEMPAIMGQVLNSIQPEIEVLSRELSNCRDVLYLGRGTSFPLAMEGALKLKEISYIQPKSYAAGQLKHGPYALIDENMPVIVIAPHDRFFDKTVTNMQEVARGGRIILITDEKGAAASKLDTMHTIVLPEVDEIIAPMIFSLPLQLLAYHTAVFMGTDVDQPRNLAKSVTVE.

Residue cysteine 2 is the Nucleophile; for GATase activity of the active site. The Glutamine amidotransferase type-2 domain maps to 2 to 216 (CGIVGIVGHQ…DGDWAVIGKT (215 aa)). SIS domains follow at residues 280–420 (DSDA…ARGT) and 454–595 (LSRE…VDQP). The active-site For Fru-6P isomerization activity is lysine 600.

Its subcellular location is the cytoplasm. It catalyses the reaction D-fructose 6-phosphate + L-glutamine = D-glucosamine 6-phosphate + L-glutamate. Involved in the production of the root hair deformation (HAD) factor specifically on medicago. The protein is Glutamine--fructose-6-phosphate aminotransferase [isomerizing] (nodM) of Rhizobium meliloti (Ensifer meliloti).